A 464-amino-acid chain; its full sequence is Chromosomal replication initiator protein DnaA (464 aa).

The domain I, interacts with DnaA modulators stretch occupies residues 1–82; the sequence is MSLSLWQQCL…LLRFEVGSKP (82 aa). The domain II stretch occupies residues 82–127; that stretch reads PITQVISQTVTASVSSAPAAPAARTAAPSRPSWDNAAAQPELSYRS. Residues 98 to 113 are compositionally biased toward low complexity; that stretch reads APAAPAARTAAPSRPS. A disordered region spans residues 98-117; sequence APAAPAARTAAPSRPSWDNA. Positions 128–344 are domain III, AAA+ region; it reads NVNPKHTFDN…GALNRVIANA (217 aa). Positions 172, 174, 175, and 176 each coordinate ATP. Positions 345–464 are domain IV, binds dsDNA; sequence NFTGRAITID…FSNLIRTLSS (120 aa).

Belongs to the DnaA family. As to quaternary structure, oligomerizes as a right-handed, spiral filament on DNA at oriC.

Its subcellular location is the cytoplasm. Plays an important role in the initiation and regulation of chromosomal replication. Binds to the origin of replication; it binds specifically double-stranded DNA at a 9 bp consensus (dnaA box): 5'-TTATC[CA]A[CA]A-3'. DnaA binds to ATP and to acidic phospholipids. DnaA can inhibit its own gene expression as well as that of other genes. In terms of biological role, plays an essential role in the initiation and regulation of chromosomal replication. ATP-DnaA binds to the origin of replication (oriC) to initiate formation of the DNA replication initiation complex once per cell cycle. Binds the DnaA box (a 9 base pair repeat at the origin) and separates the double-stranded (ds)DNA. Forms a right-handed helical filament on oriC DNA; dsDNA binds to the exterior of the filament while single-stranded (ss)DNA is stabiized in the filament's interior. The ATP-DnaA-oriC complex binds and stabilizes one strand of the AT-rich DNA unwinding element (DUE), permitting loading of DNA polymerase. After initiation quickly degrades to an ADP-DnaA complex that is not apt for DNA replication. Binds acidic phospholipids. The protein is Chromosomal replication initiator protein DnaA of Serratia marcescens.